The following is a 323-amino-acid chain: Aldo-keto reductase family 1 member C13 (323 aa).

NAD(+) contacts are provided by residues 20–24 (GFGTY), aspartate 50, and tyrosine 55. Tyrosine 55 acts as the Proton donor in catalysis. Histidine 117 is a binding site for substrate. Residues 166–167 (SN), glutamine 190, 216–224 (YGALGTQRY), and 270–280 (QSFKENEMREN) each bind NAD(+).

Belongs to the aldo/keto reductase family.

Its function is as follows. Catalyzes the dehydrogenation of 17-beta-hydroxysteroids. May also exhibit significant activity with a variety of cyclic and alicyclic alcohols. Uses both NAD and NADP, but the activity is much greater with NAD than with NADP. The protein is Aldo-keto reductase family 1 member C13 (Akr1c13) of Mus musculus (Mouse).